The following is a 277-amino-acid chain: Cell division protein ZipA (277 aa).

Topologically, residues 1–5 (MQDLR) are periplasmic. The helical transmembrane segment at 6-26 (LMLLLFGVITIIVLFLHGVWA) threads the bilayer. The Cytoplasmic segment spans residues 27–277 (RRKERSALFY…NALIRSTPHL (251 aa)). The disordered stretch occupies residues 120-139 (QKKSDDLSHQSKETHHPSIQ).

It belongs to the ZipA family. Interacts with FtsZ via their C-terminal domains.

The protein localises to the cell inner membrane. In terms of biological role, essential cell division protein that stabilizes the FtsZ protofilaments by cross-linking them and that serves as a cytoplasmic membrane anchor for the Z ring. Also required for the recruitment to the septal ring of downstream cell division proteins. In Hamiltonella defensa subsp. Acyrthosiphon pisum (strain 5AT), this protein is Cell division protein ZipA.